A 2549-amino-acid chain; its full sequence is MLGTGPATATAGAATSSNVSVLQQFASGLKSRNEETRAKAAKELQHYVTMELREMSQEESTRFYDQLNHHIFELVSSSDANERKGGILAIASLIGVEGGNSTRIGRFANYLRNLLPSSDPVVMEMASKAIGRLAMAGDTFTAEYVEFEVKRALEWLGADRNEGRRHAAVLVLRELAISVPTFFFQQVQPFFDNIFVAVWDPKQAIREGAVAALRACLILTTQREPKEMQKPQWYRHTFEEAEKGFDETLAKEKGMNRDDRIHGALLILNELVRISSMEGERLREEMEEITQQQLVHDKYCKDLMGFGTKPRHITPFTSFQAVQPQQSNALVGLLGYSSHQGLMGFGASPSPTKSTLVESRCCRDLMEEKFDQVCQWVLKCRSSKNSLIQMTILNLLPRLAAFRPSAFTDTQYLQDTMNHVLSCVKKEKERTAAFQALGLLSVAVRSEFKVYLPRVLDIIRAALPPKDFAHKRQKTVQVDATVFTCISMLARAMGPGIQQDIKELLEPMLAVGLSPALTAVLYDLSRQIPQLKKDIQDGLLKMLSLVLMHKPLRHPGMPKGLAHQLASPGLTTLPEASDVASITLALRTLGSFEFEGHSLTQFVRHCADHFLNSEHKEIRMEAARTCSRLLTPSIHLISGHAHVVSQTAVQVVADVLSKLLVVGITDPDPDIRYCVLASLDERFDAHLAQAENLQALFVALNDQVFEIRELAICTVGRLSSMNPAFVMPFLRKMLIQILTELEHSGIGRIKEQSARMLGHLVSNAPRLIRPYMEPILKALILKLKDPDPDPNPGVINNVLATIGELAQVSGLEMRKWVDELFVIIMDMLQDSSLLAKRQVALWTLGQLVASTGYVVEPYRKYPTLLEVLLNFLKTEQNQGTRREAIRVLGLLGALDPYKHKVNIGMIDQSRDASAVSLSESKSSQDSSDYSTSEMLVNMGNLPLDEFYPAVSMVALMRIFRDQSLSHHHTMVVQAITFIFKSLGLKCVQFLPQVMPTFLNVIRVCDGAIREFLFQQLGMLVSFVKSHIRPYMDEIVTLMREFWVMNTSIQSTIILLIEQIVVALGGEFKLYLPQLIPHMLRVFMHDNSQGRIVSIKLLAAIQLFGANLDDYLHLLLPPIVKLFDAPEVPLPSRKAALETVDRLTESLDFTDYASRIIHPIVRTLDQSPELRSTAMDTLSSLVFQLGKKYQIFIPMVNKVLVRHRINHQRYDVLICRIVKGYTLADEEEDPLIYQHRMLRSSQGDALASGPVETGPMKKLHVSTINLQKAWGAARRVSKDDWLEWLRRLSLELLKDSSSPSLRSCWALAQAYNPMARDLFNAAFVSCWSELNEDQQDELIRSIELALTSQDIAEVTQTLLNLAEFMEHSDKGPLPLRDDNGIVLLGERAAKCRAYAKALHYKELEFQKGPTPAILESLISINNKLQQPEAASGVLEYAMKHFGELEIQATWYEKLHEWEDALVAYDKKMDTNKDDPELMLGRMRCLEALGEWGQLHQQCCEKWTLVNDETQAKMARMAAAAAWGLGQWDSMEEYTCMIPRDTHDGAFYRAVLALHQDLFSLAQQCIDKARDLLDAELTAMAGESYSRAYGAMVSCHMLSELEEVIQYKLVPERREIIRQIWWERLQGCQRIVEDWQKILMVRSLVVSPHEDMRTWLKYASLCGKSGRLALAHKTLVLLLGVDPSRQLDHPLPTVHPQVTYAYMKNMWKSARKIDAFQHMQHFVQTMQQQAQHAIATEDQQHKQELHKLMARCFLKLGEWQLNLQGINESTIPKVLQYYSAATEHDRSWYKAWHAWAVMNFEAVLHYKHQNQARDEKKKLRHASGANITNATTTATTAASAAAATSTEGSNSESEAESNESSPTPSPLQKKVTEDLSKTLLLYTVPAVQGFFRSISLSRGNNLQDTLRVLTLWFDYGHWPDVNEALVEGVKAIQIDTWLQVIPQLIARIDTPRPLVGRLIHQLLTDIGRYHPQALIYPLTVASKSTTTARHNAANKILKNMCEHSNTLVQQAMMVSEELIRVAILWHEMWHEGLEEASRLYFGERNVKGMFEVLEPLHAMMERGPQTLKETSFNQAYGRDLMEAQEWCRKYMKSGNVKDLTQAWDLYYHVFRRISKQLPQLTSLELQYVSPKLLMCRDLELAVPGTYDPNQPIIRIQSIAPSLQVITSKQRPRKLTLMGSNGHEFVFLLKGHEDLRQDERVMQLFGLVNTLLANDPTSLRKNLSIQRYAVIPLSTNSGLIGWVPHCDTLHALIRDYREKKKILLNIEHRIMLRMAPDYDHLTLMQKVEVFEHAVNNTAGDDLAKLLWLKSPSSEVWFDRRTNYTRSLAVMSMVGYILGLGDRHPSNLMLDRLSGKILHIDFGDCFEVAMTREKFPEKIPFRLTRMLTNAMEVTGLDGNYRTTCHTVMEVLREHKDSVMAVLEAFVYDPLLNWRLMDTNAKGNKRSRTRTDSYSAGQSVEILDGVELGEPAHKKTGTTVPESIHSFIGDGLVKPEALNKKAIQIINRVRDKLTGRDFSHDDTLDVPTQVELLIKQATSHENLCQCYIGWCPFW.

The residue at position 1 (Met-1) is an N-acetylmethionine. Residues 1 to 651 (MLGTGPATAT…HVVSQTAVQV (651 aa)) form an interaction with NBN region. HEAT repeat units follow at residues 16–53 (SSNV…MELR), 55–99 (MSQE…VEGG), 100–137 (NSTR…AMAG), 138–179 (DTFT…AISV), 180–220 (PTFF…LILT), 222–276 (QREP…RISS), 277–313 (MEGE…PRHI), 314–364 (TPFT…CCRD), 365–409 (LMEE…AFTD), 410–445 (TQYL…VAVR), 446–494 (SEFK…RAMG), 495–529 (PGIQ…RQIP), 530–563 (QLKK…GLAH), 564–596 (QLAS…EFEG), 597–636 (HSLT…SIHL), 637–683 (ISGH…DERF), 686–724 (HLAQ…MNPA), 727–766 (MPFL…NAPR), 769–811 (RPYM…VSGL), 814–853 (RKWV…STGY), 857–893 (PYRK…LLGA), 894–942 (LDPY…GNLP), 943–988 (LDEF…KCVQ), 989–1027 (FLPQ…KSHI), 1029–1068 (PYMD…GEFK), 1069–1105 (LYLP…LFGA), 1106–1144 (NLDD…RLTE), 1145–1188 (SLDF…GKKY), 1189–1225 (QIFI…LADE), 1226–1273 (EEDP…GAAR), 1274–1311 (RVSK…QAYN), and 1312–1345 (PMAR…ELAL). A Phosphoserine modification is found at Ser-567. Thr-1162 carries the post-translational modification Phosphothreonine. Lys-1218 is modified (N6-acetyllysine). Ser-1261 is subject to Phosphoserine. TPR repeat units follow at residues 1346–1382 (TSQD…GIVL), 1383–1408 (LGER…QKGP), 1409–1442 (TPAI…HFGE), 1443–1473 (LEIQ…NKDD), 1474–1507 (PELM…VNDE), 1508–1541 (TQAK…RDTH), 1542–1574 (DGAF…LDAE), 1575–1614 (LTAM…RREI), 1615–1649 (IRQI…PHED), 1650–1693 (MRTW…PTVH), 1694–1731 (PQVT…AQHA), 1732–1786 (IATE…DRSW), 1787–1846 (YKAW…STEG), 1898–1930 (NNLQ…VKAI), 1931–1970 (QIDT…YHPQ), and 1971–2005 (ALIY…SNTL). In terms of domain architecture, FAT spans 1382–1982 (LLGERAAKCR…IYPLTVASKS (601 aa)). Residues Lys-1662, Lys-1702, and Arg-1749 each coordinate 1D-myo-inositol hexakisphosphate. A disordered region spans residues 1812 to 1867 (DEKKKLRHASGANITNATTTATTAASAAAATSTEGSNSESEAESNESSPTPSPLQK). Over residues 1826 to 1860 (TNATTTATTAASAAAATSTEGSNSESEAESNESSP) the composition is skewed to low complexity. Residues 2012-2144 (VSEELIRVAI…DLELAVPGTY (133 aa)) are sufficient for interaction with the FKBP1A/rapamycin complex. Lys-2066 participates in a covalent cross-link: Glycyl lysine isopeptide (Lys-Gly) (interchain with G-Cter in ubiquitin). A PI3K/PI4K catalytic domain is found at 2156-2469 (IAPSLQVITS…GVELGEPAHK (314 aa)). Residue Ser-2159 is modified to Phosphoserine. Residues 2162-2168 (VITSKQR) form a G-loop region. Residue Thr-2164 is modified to Phosphothreonine. ATP contacts are provided by Ser-2165 and Gln-2167. Position 2173 is a phosphothreonine; by PKB/AKT1 (Thr-2173). ATP is bound by residues Leu-2185, Lys-2187, Glu-2190, Tyr-2225, Gly-2238, Trp-2239, Val-2240, and Thr-2245. An interaction with MLST8 region spans residues 2258 to 2296 (KILLNIEHRIMLRMAPDYDHLTLMQKVEVFEHAVNNTAG). The interval 2335–2343 (GLGDRHPSN) is catalytic loop. Asn-2343 is a binding site for Mg(2+). ATP is bound by residues Met-2345 and Ile-2356. The tract at residues 2355–2380 (HIDFGDCFEVAMTREKFPEKIPFRLT) is activation loop. Position 2357 (Asp-2357) interacts with Mg(2+). Thr-2446 is subject to Phosphothreonine; by RPS6KB1. Ser-2448 bears the Phosphoserine; by RPS6KB1 mark. At Ser-2478 the chain carries Phosphoserine. Ser-2481 carries the post-translational modification Phosphoserine; by autocatalysis. The FATC domain maps to 2517-2549 (DTLDVPTQVELLIKQATSHENLCQCYIGWCPFW).

The protein belongs to the PI3/PI4-kinase family. As to quaternary structure, part of the mechanistic target of rapamycin complex 1 (mTORC1) which contains MTOR, MLST8 and RPTOR. The mTORC1 complex is a 1 Md obligate dimer of two stoichiometric heterotetramers with overall dimensions of 290 A x 210 A x 135 A. It has a rhomboid shape and a central cavity, the dimeric interfaces are formed by interlocking interactions between the two MTOR and the two RPTOR subunits. The MLST8 subunit forms distal foot-like protuberances, and contacts only one MTOR within the complex, while the small AKT1S1/PRAS40 localizes to the midsection of the central core, in close proximity to RPTOR. mTORC1 associates with AKT1S1/PRAS40, which inhibits its activity by blocking MTOR substrate-recruitment site. Component of the mechanistic target of rapamycin complex 2 (mTORC2), consisting in two heterotretramers composed of MTOR, MLST8, RICTOR and MAPKAP1/SIN1. Interacts with PLPP7 and PML. Interacts with PRR5 and RICTOR; the interaction is direct within the mTORC2 complex and interaction with RICTOR is enhanced by deubiquitination of RICTOR by USP9X. mTORC1 and mTORC2 associate with DEPTOR, which regulates their activity. Interacts with WAC; WAC positively regulates MTOR activity by promoting the assembly of the TTT complex composed of TELO2, TTI1 and TTI2 and the RUVBL complex composed of RUVBL1 and RUVBL2 into the TTT-RUVBL complex which leads to the dimerization of the mTORC1 complex and its subsequent activation. Interacts with UBQLN1. Interacts with TTI1 and TELO2. Interacts with CLIP1; phosphorylates and regulates CLIP1. Interacts with NBN. Interacts with HTR6. Interacts with BRAT1. Interacts with MEAK7 (via C-terminal domain); the interaction increases upon nutrient stimulation. Interacts with TM4SF5; the interaction is positively regulated by arginine and is negatively regulated by leucine. Interacts with GPR137B. Interacts with NCKAP1L. Interacts with TPCN1 and TPCN2; the interaction is required for TPCN1 and TPCN2 sensitivity to ATP. Interacts with ATP6V1A and with CRYAB, forming a ternary complex. Interacts with SLC38A7; this interaction mediates the recruitment of mTORC1 to the lysosome and its subsequent activation. Interacts with TSPAN8. In terms of processing, autophosphorylates when part of mTORC1 or mTORC2. Phosphorylation at Ser-1261, Ser-2159 and Thr-2164 promotes autophosphorylation. Phosphorylated at Ser-2448 by RPS6KB1. Phosphorylation in the kinase domain modulates the interactions of MTOR with RPTOR and AKT1S1/PRAS40 and leads to increased intrinsic mTORC1 kinase activity. Phosphorylation at Ser-2159 by TBK1 in response to growth factors and pathogen recognition receptors promotes mTORC1 activity. Phosphorylation at Ser-2159 by TBK1 in response to EGF growth factor promotes mTORC2 activity, leading to AKT1 phosphorylation and activation. Phosphorylation at Thr-2173 in the ATP-binding region by AKT1 strongly reduces kinase activity. Post-translationally, ubiquitinated at Lys-2066 by the SCF(FBXO22) complex via 'Lys-27'-linked ubiquitination prevents mTORC1 substrate recruitment.

It localises to the lysosome membrane. It is found in the endoplasmic reticulum membrane. The protein resides in the golgi apparatus membrane. The protein localises to the cell membrane. Its subcellular location is the mitochondrion outer membrane. It localises to the cytoplasm. It is found in the nucleus. The protein resides in the PML body. The protein localises to the microsome membrane. Its subcellular location is the cytoplasmic vesicle. It localises to the phagosome. The enzyme catalyses L-seryl-[protein] + ATP = O-phospho-L-seryl-[protein] + ADP + H(+). It carries out the reaction L-threonyl-[protein] + ATP = O-phospho-L-threonyl-[protein] + ADP + H(+). The catalysed reaction is L-tyrosyl-[protein] + ATP = O-phospho-L-tyrosyl-[protein] + ADP + H(+). The mTORC1 complex is activated in response to nutrients, growth factors or amino acids: activation requires relocalization of the mTORC1 complex to lysosomes that is mediated by the Ragulator complex, SLC38A9, and the Rag GTPases RagA/RRAGA, RagB/RRAGB, RagC/RRAGC and RagD/RRAGD. Activation of mTORC1 by growth factors such as insulin involves AKT1-mediated phosphorylation of TSC1-TSC2, which leads to the activation of the RHEB GTPase a potent activator of the protein kinase activity of mTORC1. Insulin-stimulated and amino acid-dependent phosphorylation at Ser-1261 promotes autophosphorylation and the activation of mTORC1. On the other hand, low cellular energy levels can inhibit mTORC1 through activation of PRKAA1 while hypoxia inhibits mTORC1 through a REDD1-dependent mechanism which may also require PRKAA1. The kinase activity of MTOR within the mTORC1 complex is positively regulated by MLST8. The kinase activity of MTOR is inhibited by DEPTOR and AKT1S1. The non-canonical mTORC1 complex is independent of the RHEB GTPase and specifically mediates phosphorylation of MiT/TFE factors TFEB and TFE3 but not other mTORC1 substrates: it is activated by FLCN, which activates Rag GTPases RagC/RRAGC and RagD/RRAGD. MTOR is the target of the immunosuppressive and anti-cancer drug rapamycin which acts in complex with FKBP1A/FKBP12, and specifically inhibits its kinase activity. mTORC2 is also activated by growth factors, but seems to be nutrient-insensitive. mTORC2 associates and is directly activated by ribosomes. mTORC2 may also be regulated by RHEB but in an indirect manner through the PI3K signaling pathway. Its function is as follows. Serine/threonine protein kinase which is a central regulator of cellular metabolism, growth and survival in response to hormones, growth factors, nutrients, energy and stress signals. MTOR directly or indirectly regulates the phosphorylation of at least 800 proteins. Functions as part of 2 structurally and functionally distinct signaling complexes mTORC1 and mTORC2 (mTOR complex 1 and 2). In response to nutrients, growth factors or amino acids, mTORC1 is recruited to the lysosome membrane and promotes protein, lipid and nucleotide synthesis by phosphorylating key regulators of mRNA translation and ribosome synthesis. This includes phosphorylation of EIF4EBP1 and release of its inhibition toward the elongation initiation factor 4E (eiF4E). Moreover, phosphorylates and activates RPS6KB1 and RPS6KB2 that promote protein synthesis by modulating the activity of their downstream targets including ribosomal protein S6, eukaryotic translation initiation factor EIF4B, and the inhibitor of translation initiation PDCD4. Stimulates the pyrimidine biosynthesis pathway, both by acute regulation through RPS6KB1-mediated phosphorylation of the biosynthetic enzyme CAD, and delayed regulation, through transcriptional enhancement of the pentose phosphate pathway which produces 5-phosphoribosyl-1-pyrophosphate (PRPP), an allosteric activator of CAD at a later step in synthesis, this function is dependent on the mTORC1 complex. Regulates ribosome synthesis by activating RNA polymerase III-dependent transcription through phosphorylation and inhibition of MAF1 an RNA polymerase III-repressor. Activates dormant ribosomes by mediating phosphorylation of SERBP1, leading to SERBP1 inactivation and reactivation of translation. In parallel to protein synthesis, also regulates lipid synthesis through SREBF1/SREBP1 and LPIN1. To maintain energy homeostasis mTORC1 may also regulate mitochondrial biogenesis through regulation of PPARGC1A. In the same time, mTORC1 inhibits catabolic pathways: negatively regulates autophagy through phosphorylation of ULK1. Under nutrient sufficiency, phosphorylates ULK1 at 'Ser-758', disrupting the interaction with AMPK and preventing activation of ULK1. Also prevents autophagy through phosphorylation of the autophagy inhibitor DAP. Also prevents autophagy by phosphorylating RUBCNL/Pacer under nutrient-rich conditions. Prevents autophagy by mediating phosphorylation of AMBRA1, thereby inhibiting AMBRA1 ability to mediate ubiquitination of ULK1 and interaction between AMBRA1 and PPP2CA. mTORC1 exerts a feedback control on upstream growth factor signaling that includes phosphorylation and activation of GRB10 a INSR-dependent signaling suppressor. Among other potential targets mTORC1 may phosphorylate CLIP1 and regulate microtubules. The mTORC1 complex is inhibited in response to starvation and amino acid depletion. The non-canonical mTORC1 complex, which acts independently of RHEB, specifically mediates phosphorylation of MiT/TFE factors TFEB and TFE3 in the presence of nutrients, promoting their cytosolic retention and inactivation. Upon starvation or lysosomal stress, inhibition of mTORC1 induces dephosphorylation and nuclear translocation of TFEB and TFE3, promoting their transcription factor activity. The mTORC1 complex regulates pyroptosis in macrophages by promoting GSDMD oligomerization. MTOR phosphorylates RPTOR which in turn inhibits mTORC1. As part of the mTORC2 complex, MTOR transduces signals from growth factors to pathways involved in proliferation, cytoskeletal organization, lipogenesis and anabolic output. In response to growth factors, mTORC2 phosphorylates and activates AGC protein kinase family members, including AKT (AKT1, AKT2 and AKT3), PKC (PRKCA, PRKCB and PRKCE) and SGK1. In contrast to mTORC1, mTORC2 is nutrient-insensitive. mTORC2 plays a critical role in AKT1 activation by mediating phosphorylation of different sites depending on the context, such as 'Thr-450', 'Ser-473', 'Ser-477' or 'Thr-479', facilitating the phosphorylation of the activation loop of AKT1 on 'Thr-308' by PDPK1/PDK1 which is a prerequisite for full activation. mTORC2 also regulates the phosphorylation of SGK1 at 'Ser-422'. mTORC2 may regulate the actin cytoskeleton, through phosphorylation of PRKCA, PXN and activation of the Rho-type guanine nucleotide exchange factors RHOA and RAC1A or RAC1B. The mTORC2 complex also phosphorylates various proteins involved in insulin signaling, such as FBXW8 and IGF2BP1. May also regulate insulin signaling by acting as a tyrosine protein kinase that catalyzes phosphorylation of IGF1R and INSR. Regulates osteoclastogenesis by adjusting the expression of CEBPB isoforms. Plays an important regulatory role in the circadian clock function; regulates period length and rhythm amplitude of the suprachiasmatic nucleus (SCN) and liver clocks. In Rattus norvegicus (Rat), this protein is Serine/threonine-protein kinase mTOR.